A 716-amino-acid chain; its full sequence is Leucine-rich repeat neuronal protein 1 (716 aa).

A signal peptide spans 1-25 (MARLSTGKAACQVVLGLLITSLTES). The LRRNT domain occupies 26–72 (SILTSECPQLCVCEIRPWFTPQSTYREATTVDCNDLRLTRIPGNLSS). The Extracellular portion of the chain corresponds to 26 to 631 (SILTSECPQL…DISDHETSTA (606 aa)). A glycan (N-linked (GlcNAc...) asparagine) is linked at Asn69. LRR repeat units lie at residues 73-95 (DTQVLLLQSNNIAKTVDELQQLF), 96-117 (NLTELDFSQNNFTNIKEVGLAN), 120-141 (QLTTLHLEENQISEMTDYCLQD), 144-165 (NLQELYINHNQISTISANAFSG), 168-189 (NLLRLHLNSNKLKVIDSRWFDS), 192-213 (NLEILMIGENPVIGILDMNFRP), 216-237 (NLRSLVLAGMYLTDVPGNALVG), 240-261 (SLESLSFYDNKLIKVPQLALQK), and 264-285 (NLKFLDLNKNPIHKIQEGDFKN). 2 N-linked (GlcNAc...) asparagine glycosylation sites follow: Asn96 and Asn117. The LRRCT domain occupies 371-424 (NPLRCDCVIHWINSNKTNIRFMEPLSMFCAMPPEYRGQQVKEVLIQDSSEQCLP). Asn385 is a glycosylation site (N-linked (GlcNAc...) asparagine). The 92-residue stretch at 424–515 (PMISHDTFPN…GADTRVATIK (92 aa)) folds into the Ig-like C2-type domain. Residues Cys447 and Cys499 are joined by a disulfide bond. The N-linked (GlcNAc...) asparagine glycan is linked to Asn517. The 95-residue stretch at 525-619 (QVLKIYVKQT…VNVTTKTAAF (95 aa)) folds into the Fibronectin type-III domain. A helical transmembrane segment spans residues 632-652 (LAAVMGSMFAVISLASIAIYI). The Cytoplasmic portion of the chain corresponds to 653–716 (AKRFKRKNYH…VDTSRSYYMW (64 aa)). The segment at 692-716 (SDKDKDGSADTKPTQVDTSRSYYMW) is disordered. The span at 702–716 (TKPTQVDTSRSYYMW) shows a compositional bias: polar residues.

In terms of tissue distribution, expressed in brain.

The protein localises to the membrane. The polypeptide is Leucine-rich repeat neuronal protein 1 (Lrrn1) (Mus musculus (Mouse)).